The sequence spans 199 residues: TATA-box-binding protein (199 aa).

Repeat copies occupy residues 10–86 (IENI…VKLL) and 101–177 (IQNI…YNQL).

Belongs to the TBP family.

Functionally, general factor that plays a role in the activation of archaeal genes transcribed by RNA polymerase. Binds specifically to the TATA box promoter element which lies close to the position of transcription initiation. The protein is TATA-box-binding protein of Pyrobaculum aerophilum (strain ATCC 51768 / DSM 7523 / JCM 9630 / CIP 104966 / NBRC 100827 / IM2).